A 612-amino-acid chain; its full sequence is Anaerobic magnesium-protoporphyrin IX monomethyl ester cyclase (612 aa).

Residues 9–143 form the B12-binding domain; the sequence is NYHSGGAEIA…KAYEADNFAE (135 aa). The Radical SAM core domain occupies 190 to 417; it reads PLGVRVAIPN…MKPKALTRGE (228 aa). Residues cysteine 204, cysteine 208, and cysteine 211 each contribute to the [4Fe-4S] cluster site.

Belongs to the BchE family. [4Fe-4S] cluster serves as cofactor. It depends on adenosylcob(III)alamin as a cofactor.

It carries out the reaction Mg-protoporphyrin IX 13-monomethyl ester + 3 S-adenosyl-L-methionine + H2O = 3,8-divinyl protochlorophyllide a + 3 5'-deoxyadenosine + 3 L-methionine + 4 H(+). The protein operates within porphyrin-containing compound metabolism; bacteriochlorophyll biosynthesis (light-independent). Involved in the tetrapyrrole biosynthetic pathways leading to chlorophyll and bacteriochlorophyll (BChl). Catalyzes the anaerobic formation of the isocyclic ring (E-ring) in Mg-protoporphyrin monomethyl ester (MPE) to yield protochlorophyllide a (PChlide a) via a six-electron oxidation and the formation of an oxo group at position C13 using oxygen from a water molecule. This chain is Anaerobic magnesium-protoporphyrin IX monomethyl ester cyclase, found in Cereibacter sphaeroides (strain ATCC 17023 / DSM 158 / JCM 6121 / CCUG 31486 / LMG 2827 / NBRC 12203 / NCIMB 8253 / ATH 2.4.1.) (Rhodobacter sphaeroides).